The chain runs to 277 residues: Phosphate import ATP-binding protein PstB 2 (277 aa).

Residues Ile-31–Ile-272 enclose the ABC transporter domain. Position 63–70 (Gly-63–Ser-70) interacts with ATP.

Belongs to the ABC transporter superfamily. Phosphate importer (TC 3.A.1.7) family. In terms of assembly, the complex is composed of two ATP-binding proteins (PstB), two transmembrane proteins (PstC and PstA) and a solute-binding protein (PstS).

Its subcellular location is the cell inner membrane. It carries out the reaction phosphate(out) + ATP + H2O = ADP + 2 phosphate(in) + H(+). Functionally, part of the ABC transporter complex PstSACB involved in phosphate import. Responsible for energy coupling to the transport system. The polypeptide is Phosphate import ATP-binding protein PstB 2 (Pseudomonas syringae pv. tomato (strain ATCC BAA-871 / DC3000)).